The sequence spans 203 residues: Corrinoid adenosyltransferase (203 aa).

The segment at 1–21 (MNESPEKDQRHRERMERKKAV) is disordered. An ATP-binding site is contributed by 41 to 47 (GNGKGKS).

This sequence belongs to the Cob(I)alamin adenosyltransferase family. As to quaternary structure, monomer. It depends on Mn(2+) as a cofactor.

It is found in the cytoplasm. It catalyses the reaction 2 cob(II)yrinate a,c diamide + reduced [electron-transfer flavoprotein] + 2 ATP = 2 adenosylcob(III)yrinate a,c-diamide + 2 triphosphate + oxidized [electron-transfer flavoprotein] + 3 H(+). The catalysed reaction is 2 cob(II)alamin + reduced [electron-transfer flavoprotein] + 2 ATP = 2 adenosylcob(III)alamin + 2 triphosphate + oxidized [electron-transfer flavoprotein] + 3 H(+). Its pathway is cofactor biosynthesis; adenosylcobalamin biosynthesis; adenosylcobalamin from cob(II)yrinate a,c-diamide: step 2/7. Required for both de novo synthesis of the corrin ring for the assimilation of exogenous corrinoids. Participates in the adenosylation of a variety of incomplete and complete corrinoids. This chain is Corrinoid adenosyltransferase (cobO), found in Pseudomonas aeruginosa (strain ATCC 15692 / DSM 22644 / CIP 104116 / JCM 14847 / LMG 12228 / 1C / PRS 101 / PAO1).